The sequence spans 837 residues: Cap-specific mRNA (nucleoside-2'-O-)-methyltransferase 1 (837 aa).

The segment at 1–66 (MKRRTDPECT…EGKQPCSDDF (66 aa)) is disordered. Positions 2 to 18 (KRRTDPECTAPLKKQKR) match the Bipartite nuclear localization signal motif. 3 positions are modified to phosphoserine: S27, S30, and S52. Basic and acidic residues predominate over residues 56 to 66 (TEGKQPCSDDF). Residues 86-132 (YNSVSQRLMAKMGFREGEGLGKYSQGRKDIVETSNQKGRRGLGLTLQ) enclose the G-patch domain. Residue S90 is modified to Phosphoserine. At K107 the chain carries N6-acetyllysine. Substrate is bound by residues 202 to 206 (KSVFD) and R217. The RrmJ-type SAM-dependent 2'-O-MTase domain occupies 230–449 (FFLNRAAMKM…ERYVVCKGLK (220 aa)). Residue N233 coordinates S-adenosyl-L-methionine. The active site involves K238. S-adenosyl-L-methionine is bound by residues 276-282 (CAGPGGF) and 334-335 (DI). Residue D363 is part of the active site. Residue 373-375 (NLQ) coordinates substrate. The active-site Proton acceptor is the K403. Position 438 (N438) interacts with substrate. An interaction with POLR2A region spans residues 726-834 (SGGTPKLSYT…VLSFIQSHNP (109 aa)). One can recognise a WW domain in the interval 751-785 (RTVNEPWTMGFSKSNNRKFFYNKKTQKSVYALPTE).

As to quaternary structure, interacts with POLR2A (via C-terminus).

The protein localises to the nucleus. It catalyses the reaction a 5'-end (N(7)-methyl 5'-triphosphoguanosine)-ribonucleoside in mRNA + S-adenosyl-L-methionine = a 5'-end (N(7)-methyl 5'-triphosphoguanosine)-(2'-O-methyl-ribonucleoside) in mRNA + S-adenosyl-L-homocysteine + H(+). Its function is as follows. S-adenosyl-L-methionine-dependent methyltransferase that mediates mRNA cap1 2'-O-ribose methylation to the 5'-cap structure of mRNAs. Methylates the ribose of the first nucleotide of a m(7)GpppG-capped mRNA and small nuclear RNA (snRNA) to produce m(7)GpppRm (cap1). Displays a preference for cap0 transcripts. Cap1 modification is linked to higher levels of translation. May be involved in the interferon response pathway. The chain is Cap-specific mRNA (nucleoside-2'-O-)-methyltransferase 1 (Cmtr1) from Mus musculus (Mouse).